The primary structure comprises 256 residues: tRNA pseudouridine synthase A (256 aa).

Residue Asp52 is the Nucleophile of the active site. Tyr110 provides a ligand contact to substrate.

Belongs to the tRNA pseudouridine synthase TruA family. Homodimer.

It catalyses the reaction uridine(38/39/40) in tRNA = pseudouridine(38/39/40) in tRNA. In terms of biological role, formation of pseudouridine at positions 38, 39 and 40 in the anticodon stem and loop of transfer RNAs. This Stenotrophomonas maltophilia (strain K279a) protein is tRNA pseudouridine synthase A.